Reading from the N-terminus, the 356-residue chain is MEILEEKPKEGKIKIKAETLDDLWHLYHIISEGDVVYAKTLRKQAQRSDSLRPEKVEAVPVFLGIKAEKINLHRFANQLRITGPIIYASREDVPLGRYHTLTVEPGTVITIQKEKWKNYHIERLKEAIESSKKARVMIVAIEDGEAEIAIVREYGLDFVGSITYNISGKRYNIKRDDEEKKFFHEVAKSMEELMKRENIEKAIVAGPGFYKENFVNFLRENYPELAKKVVTDDTSMGGRTGIYEVIKRGTVDKVYTESRISKEIKLVEKVIEEIAKNGLVAYGLKEVEEATNYGAVETLIVLDSLLKGELREKIEELMELARNLRASVVVVSSEHEGGDKLKALGGIAALLRFKIK.

The protein belongs to the eukaryotic release factor 1 family. Pelota subfamily. Monomer. A divalent metal cation is required as a cofactor.

The protein resides in the cytoplasm. Functionally, may function in recognizing stalled ribosomes, interact with stem-loop structures in stalled mRNA molecules, and effect endonucleolytic cleavage of the mRNA. May play a role in the release non-functional ribosomes and degradation of damaged mRNAs. Has endoribonuclease activity. This is Protein pelota homolog from Pyrococcus furiosus (strain ATCC 43587 / DSM 3638 / JCM 8422 / Vc1).